The following is a 404-amino-acid chain: Cytoplasmic tRNA 2-thiolation protein 2 (404 aa).

Belongs to the CTU2/NCS2 family.

It is found in the cytoplasm. Its pathway is tRNA modification; 5-methoxycarbonylmethyl-2-thiouridine-tRNA biosynthesis. In terms of biological role, plays a central role in 2-thiolation of mcm(5)S(2)U at tRNA wobble positions of tRNA(Lys), tRNA(Glu) and tRNA(Gln). May act by forming a heterodimer with NCS6/CTU1 that ligates sulfur from thiocarboxylated URM1 onto the uridine of tRNAs at wobble position. This is Cytoplasmic tRNA 2-thiolation protein 2 from Drosophila mojavensis (Fruit fly).